A 72-amino-acid polypeptide reads, in one-letter code: Translation initiation factor IF-1 (72 aa).

The 72-residue stretch at 1-72 (MAKEDVIEIE…TRGRITYRFK (72 aa)) folds into the S1-like domain.

The protein belongs to the IF-1 family. As to quaternary structure, component of the 30S ribosomal translation pre-initiation complex which assembles on the 30S ribosome in the order IF-2 and IF-3, IF-1 and N-formylmethionyl-tRNA(fMet); mRNA recruitment can occur at any time during PIC assembly.

The protein localises to the cytoplasm. Functionally, one of the essential components for the initiation of protein synthesis. Stabilizes the binding of IF-2 and IF-3 on the 30S subunit to which N-formylmethionyl-tRNA(fMet) subsequently binds. Helps modulate mRNA selection, yielding the 30S pre-initiation complex (PIC). Upon addition of the 50S ribosomal subunit IF-1, IF-2 and IF-3 are released leaving the mature 70S translation initiation complex. The protein is Translation initiation factor IF-1 of Streptococcus mutans serotype c (strain ATCC 700610 / UA159).